A 396-amino-acid chain; its full sequence is NADH-quinone oxidoreductase subunit D 2 (396 aa).

Belongs to the complex I 49 kDa subunit family. NDH-1 is composed of 14 different subunits. Subunits NuoB, C, D, E, F, and G constitute the peripheral sector of the complex.

It localises to the cell inner membrane. The enzyme catalyses a quinone + NADH + 5 H(+)(in) = a quinol + NAD(+) + 4 H(+)(out). Functionally, NDH-1 shuttles electrons from NADH, via FMN and iron-sulfur (Fe-S) centers, to quinones in the respiratory chain. The immediate electron acceptor for the enzyme in this species is believed to be ubiquinone. Couples the redox reaction to proton translocation (for every two electrons transferred, four hydrogen ions are translocated across the cytoplasmic membrane), and thus conserves the redox energy in a proton gradient. The polypeptide is NADH-quinone oxidoreductase subunit D 2 (Beijerinckia indica subsp. indica (strain ATCC 9039 / DSM 1715 / NCIMB 8712)).